An 812-amino-acid polypeptide reads, in one-letter code: Valine--tRNA ligase (812 aa).

The 'HIGH' region signature appears at 47–57 (PTISGQLHIGH). Residues 536 to 540 (KMSKS) carry the 'KMSKS' region motif. Lys-539 is a binding site for ATP.

This sequence belongs to the class-I aminoacyl-tRNA synthetase family. ValS type 2 subfamily. Monomer.

The protein localises to the cytoplasm. The enzyme catalyses tRNA(Val) + L-valine + ATP = L-valyl-tRNA(Val) + AMP + diphosphate. Functionally, catalyzes the attachment of valine to tRNA(Val). As ValRS can inadvertently accommodate and process structurally similar amino acids such as threonine, to avoid such errors, it has a 'posttransfer' editing activity that hydrolyzes mischarged Thr-tRNA(Val) in a tRNA-dependent manner. This Ehrlichia ruminantium (strain Gardel) protein is Valine--tRNA ligase.